A 129-amino-acid chain; its full sequence is Small ribosomal subunit protein uS11 (129 aa).

It belongs to the universal ribosomal protein uS11 family. Part of the 30S ribosomal subunit. Interacts with proteins S7 and S18. Binds to IF-3.

Functionally, located on the platform of the 30S subunit, it bridges several disparate RNA helices of the 16S rRNA. Forms part of the Shine-Dalgarno cleft in the 70S ribosome. The sequence is that of Small ribosomal subunit protein uS11 from Staphylococcus carnosus (strain TM300).